The chain runs to 179 residues: O-acetyl-ADP-ribose deacetylase (179 aa).

The Macro domain occupies Met-1–Gly-175. Substrate contacts are provided by residues Asp-11 to Ile-12, Asn-25, Gly-33 to Asp-35, and Ser-122 to Tyr-126. Residue Asp-35 is the Proton acceptor of the active site.

The protein belongs to the MacroD-type family. YmdB subfamily. Homodimer. Interacts with RNase III.

The enzyme catalyses 3''-O-acetyl-ADP-D-ribose + H2O = ADP-D-ribose + acetate + H(+). The catalysed reaction is 2''-O-acetyl-ADP-D-ribose + H2O = ADP-D-ribose + acetate + H(+). Its function is as follows. Deacetylates O-acetyl-ADP ribose to yield ADP-ribose and free acetate. Down-regulates ribonuclease 3 (RNase III) activity. Acts by interacting directly with the region of the ribonuclease that is required for dimerization/activation. This chain is O-acetyl-ADP-ribose deacetylase, found in Salmonella typhi.